The sequence spans 204 residues: Ribonuclease HII (204 aa).

Positions 8-197 (RLICGVDEAG…VRELLQNPPL (190 aa)) constitute an RNase H type-2 domain. Residues Asp-14, Glu-15, and Asp-106 each contribute to the a divalent metal cation site.

The protein belongs to the RNase HII family. Mn(2+) serves as cofactor. It depends on Mg(2+) as a cofactor.

The protein resides in the cytoplasm. The enzyme catalyses Endonucleolytic cleavage to 5'-phosphomonoester.. In terms of biological role, endonuclease that specifically degrades the RNA of RNA-DNA hybrids. The chain is Ribonuclease HII from Azoarcus sp. (strain BH72).